A 379-amino-acid chain; its full sequence is Queuine tRNA-ribosyltransferase (379 aa).

The Proton acceptor role is filled by Asp-91. Residues Asp-91 to Phe-95, Asp-145, Gln-189, and Gly-216 each bind substrate. The interval Gly-247–Asp-253 is RNA binding. The active-site Nucleophile is Asp-266. The tract at residues Thr-271 to Arg-275 is RNA binding; important for wobble base 34 recognition. Cys-304, Cys-306, Cys-309, and His-335 together coordinate Zn(2+).

The protein belongs to the queuine tRNA-ribosyltransferase family. In terms of assembly, homodimer. Within each dimer, one monomer is responsible for RNA recognition and catalysis, while the other monomer binds to the replacement base PreQ1. Requires Zn(2+) as cofactor.

The catalysed reaction is 7-aminomethyl-7-carbaguanine + guanosine(34) in tRNA = 7-aminomethyl-7-carbaguanosine(34) in tRNA + guanine. The protein operates within tRNA modification; tRNA-queuosine biosynthesis. Functionally, catalyzes the base-exchange of a guanine (G) residue with the queuine precursor 7-aminomethyl-7-deazaguanine (PreQ1) at position 34 (anticodon wobble position) in tRNAs with GU(N) anticodons (tRNA-Asp, -Asn, -His and -Tyr). Catalysis occurs through a double-displacement mechanism. The nucleophile active site attacks the C1' of nucleotide 34 to detach the guanine base from the RNA, forming a covalent enzyme-RNA intermediate. The proton acceptor active site deprotonates the incoming PreQ1, allowing a nucleophilic attack on the C1' of the ribose to form the product. After dissociation, two additional enzymatic reactions on the tRNA convert PreQ1 to queuine (Q), resulting in the hypermodified nucleoside queuosine (7-(((4,5-cis-dihydroxy-2-cyclopenten-1-yl)amino)methyl)-7-deazaguanosine). The polypeptide is Queuine tRNA-ribosyltransferase (Vibrio cholerae serotype O1 (strain ATCC 39315 / El Tor Inaba N16961)).